Here is a 218-residue protein sequence, read N- to C-terminus: Protein-methionine-sulfoxide reductase heme-binding subunit MsrQ (218 aa).

The next 5 membrane-spanning stretches (helical) occupy residues 14–34, 60–80, 86–106, 121–141, and 155–175; these read AVHA…WQVW, LLLI…AVLI, LGLY…WLDL, PYIT…ITST, and LHML…WLVK.

This sequence belongs to the MsrQ family. In terms of assembly, heterodimer of a catalytic subunit (MsrP) and a heme-binding subunit (MsrQ). It depends on FMN as a cofactor. Requires heme b as cofactor.

It localises to the cell inner membrane. Its function is as follows. Part of the MsrPQ system that repairs oxidized periplasmic proteins containing methionine sulfoxide residues (Met-O), using respiratory chain electrons. Thus protects these proteins from oxidative-stress damage caused by reactive species of oxygen and chlorine generated by the host defense mechanisms. MsrPQ is essential for the maintenance of envelope integrity under bleach stress, rescuing a wide series of structurally unrelated periplasmic proteins from methionine oxidation. MsrQ provides electrons for reduction to the reductase catalytic subunit MsrP, using the quinone pool of the respiratory chain. The chain is Protein-methionine-sulfoxide reductase heme-binding subunit MsrQ from Xanthomonas campestris pv. campestris (strain B100).